A 46-amino-acid chain; its full sequence is Cytochrome b559 subunit beta (46 aa).

A helical membrane pass occupies residues 21–37 (WLALHTLGIPTVFFLGA). Residue H25 participates in heme binding.

It belongs to the PsbE/PsbF family. Heterodimer of an alpha subunit and a beta subunit. PSII is composed of 1 copy each of membrane proteins PsbA, PsbB, PsbC, PsbD, PsbE, PsbF, PsbH, PsbI, PsbJ, PsbK, PsbL, PsbM, PsbT, PsbX, PsbY, PsbZ, Psb30/Ycf12, peripheral proteins PsbO, CyanoQ (PsbQ), PsbU, PsbV and a large number of cofactors. It forms dimeric complexes. Heme b serves as cofactor.

Its subcellular location is the cellular thylakoid membrane. Functionally, this b-type cytochrome is tightly associated with the reaction center of photosystem II (PSII). PSII is a light-driven water:plastoquinone oxidoreductase that uses light energy to abstract electrons from H(2)O, generating O(2) and a proton gradient subsequently used for ATP formation. It consists of a core antenna complex that captures photons, and an electron transfer chain that converts photonic excitation into a charge separation. The sequence is that of Cytochrome b559 subunit beta from Synechococcus sp. (strain CC9605).